Consider the following 189-residue polypeptide: Protein F29A7.6 (189 aa).

Residues 124 to 161 are disordered; it reads KSLGGQKLAALDKKSQSKRERRQQNERNEETTGGRRFN. The span at 133 to 161 shows a compositional bias: basic and acidic residues; the sequence is ALDKKSQSKRERRQQNERNEETTGGRRFN.

The protein belongs to the MPP6 family.

The chain is Protein F29A7.6 from Caenorhabditis elegans.